The primary structure comprises 223 residues: Membrane-associated progesterone receptor component 2 (223 aa).

The tract at residues 1–33 is disordered; sequence MAAGDGDVKLGTLGSGSESSNDGGSESPGDAGA. Serine 15 carries an O-linked (Xyl...) (chondroitin sulfate) serine glycan. A compositionally biased stretch (low complexity) spans 15–33; it reads SGSESSNDGGSESPGDAGA. The chain crosses the membrane as a helical span at residues 42-66; that stretch reads AAALALLTGGGEMLLNVALVALVLL. Phosphoserine occurs at positions 90, 104, and 208. One can recognise a Cytochrome b5 heme-binding domain in the interval 102–201; the sequence is DFSLEQLRQY…EKYDYVGRLL (100 aa). The interval 202-223 is disordered; it reads KPGEEPSEYTDEEDTKDHNKQD. A compositionally biased stretch (acidic residues) spans 206 to 215; that stretch reads EPSEYTDEED. Tyrosine 210 is modified (phosphotyrosine). A Phosphothreonine modification is found at threonine 211.

This sequence belongs to the cytochrome b5 family. MAPR subfamily. In terms of assembly, interacts with PGRMC1. Interacts with AAAS. In terms of tissue distribution, expressed by endometrial glands and stroma (at protein level). Detected in urine (at protein level).

The protein localises to the membrane. It localises to the nucleus envelope. The protein resides in the endoplasmic reticulum. It is found in the secreted. Its function is as follows. Required for the maintenance of uterine histoarchitecture and normal female reproductive lifespan. May serve as a universal non-classical progesterone receptor in the uterus. Intracellular heme chaperone required for delivery of labile, or signaling heme, to the nucleus. Plays a role in adipocyte function and systemic glucose homeostasis. In brown fat, which has a high demand for heme, delivery of labile heme in the nucleus regulates the activity of heme-responsive transcriptional repressors such as NR1D1 and BACH1. The sequence is that of Membrane-associated progesterone receptor component 2 from Homo sapiens (Human).